Here is a 42-residue protein sequence, read N- to C-terminus: Large ribosomal subunit protein bL34c (42 aa).

It belongs to the bacterial ribosomal protein bL34 family.

The protein resides in the plastid. The protein localises to the chloroplast. The sequence is that of Large ribosomal subunit protein bL34c (rpl34) from Olisthodiscus luteus (Marine phytoflagellate).